The following is a 115-amino-acid chain: Large ribosomal subunit protein bL20c (115 aa).

It belongs to the bacterial ribosomal protein bL20 family.

Its subcellular location is the plastid. It is found in the chloroplast. In terms of biological role, binds directly to 23S ribosomal RNA and is necessary for the in vitro assembly process of the 50S ribosomal subunit. It is not involved in the protein synthesizing functions of that subunit. In Pleurastrum terricola (Filamentous green alga), this protein is Large ribosomal subunit protein bL20c.